The chain runs to 90 residues: Phosphocarrier protein NPr (90 aa).

Positions 2-90 (TVKQTVEITN…ALFNSGFDED (89 aa)) constitute an HPr domain. The active-site Pros-phosphohistidine intermediate is the His16.

This sequence belongs to the HPr family.

The protein resides in the cytoplasm. Functionally, component of the phosphoenolpyruvate-dependent nitrogen-metabolic phosphotransferase system (nitrogen-metabolic PTS), that seems to be involved in regulating nitrogen metabolism. The phosphoryl group from phosphoenolpyruvate (PEP) is transferred to the phosphoryl carrier protein NPr by enzyme I-Ntr. Phospho-NPr then transfers it to EIIA-Ntr. Could function in the transcriptional regulation of sigma-54 dependent operons in conjunction with the NPr (PtsO) and EIIA-Ntr (PtsN) proteins. This chain is Phosphocarrier protein NPr (ptsO), found in Escherichia coli O157:H7.